Consider the following 163-residue polypeptide: MPAPILPLIEAAAQWPPTGALIGLDLGTKTIGVAVSDPARRLATGVETILRKTFTTDAARLLALATERKAVGLVLGLPINMDASEGPRAQSTRAFARNLARLTELPIGLWDERLSTAAVERELIANDVSRAKRAKVIDEHAAIFILQGALDRLAVLNRSTGAA.

The protein belongs to the YqgF nuclease family.

The protein localises to the cytoplasm. Functionally, could be a nuclease involved in processing of the 5'-end of pre-16S rRNA. The polypeptide is Putative pre-16S rRNA nuclease (Rhodopseudomonas palustris (strain BisA53)).